Consider the following 130-residue polypeptide: Small ribosomal subunit protein uS9 (130 aa).

Belongs to the universal ribosomal protein uS9 family.

The protein is Small ribosomal subunit protein uS9 of Vibrio vulnificus (strain CMCP6).